The sequence spans 350 residues: Phenylalanine--tRNA ligase alpha subunit (350 aa).

Glu260 is a binding site for Mg(2+).

This sequence belongs to the class-II aminoacyl-tRNA synthetase family. Phe-tRNA synthetase alpha subunit type 1 subfamily. In terms of assembly, tetramer of two alpha and two beta subunits. Requires Mg(2+) as cofactor.

The protein resides in the cytoplasm. It catalyses the reaction tRNA(Phe) + L-phenylalanine + ATP = L-phenylalanyl-tRNA(Phe) + AMP + diphosphate + H(+). The polypeptide is Phenylalanine--tRNA ligase alpha subunit (Mycoplasma capricolum subsp. capricolum (strain California kid / ATCC 27343 / NCTC 10154)).